A 105-amino-acid chain; its full sequence is Small ribosomal subunit protein uS10 (105 aa).

Belongs to the universal ribosomal protein uS10 family. In terms of assembly, part of the 30S ribosomal subunit.

Involved in the binding of tRNA to the ribosomes. The protein is Small ribosomal subunit protein uS10 of Lachnoclostridium phytofermentans (strain ATCC 700394 / DSM 18823 / ISDg) (Clostridium phytofermentans).